The following is a 228-amino-acid chain: Cytochrome c oxidase subunit 2 (228 aa).

The Mitochondrial intermembrane segment spans residues 1 to 14 (MANHSQLGFQDASS). A helical membrane pass occupies residues 15-45 (PIMEELVEFHDHALIVALAICSLVLYLLAHM). The Mitochondrial matrix segment spans residues 46-58 (LMEKLSSNAVDAQ). The helical transmembrane segment at 59–86 (EVELIWTILPAIVLVLLALPSLQILYMM) threads the bilayer. The Mitochondrial intermembrane segment spans residues 87–228 (DEIDEPDLTL…ETWSSLLSAS (142 aa)). Residues histidine 160, cysteine 195, glutamate 197, cysteine 199, histidine 203, and methionine 206 each contribute to the Cu cation site. Residue glutamate 197 coordinates Mg(2+).

Belongs to the cytochrome c oxidase subunit 2 family. In terms of assembly, component of the cytochrome c oxidase (complex IV, CIV), a multisubunit enzyme composed of 14 subunits. The complex is composed of a catalytic core of 3 subunits MT-CO1, MT-CO2 and MT-CO3, encoded in the mitochondrial DNA, and 11 supernumerary subunits COX4I, COX5A, COX5B, COX6A, COX6B, COX6C, COX7A, COX7B, COX7C, COX8 and NDUFA4, which are encoded in the nuclear genome. The complex exists as a monomer or a dimer and forms supercomplexes (SCs) in the inner mitochondrial membrane with NADH-ubiquinone oxidoreductase (complex I, CI) and ubiquinol-cytochrome c oxidoreductase (cytochrome b-c1 complex, complex III, CIII), resulting in different assemblies (supercomplex SCI(1)III(2)IV(1) and megacomplex MCI(2)III(2)IV(2)). Found in a complex with TMEM177, COA6, COX18, COX20, SCO1 and SCO2. Interacts with TMEM177 in a COX20-dependent manner. Interacts with COX20. Interacts with COX16. Cu cation is required as a cofactor.

It localises to the mitochondrion inner membrane. It carries out the reaction 4 Fe(II)-[cytochrome c] + O2 + 8 H(+)(in) = 4 Fe(III)-[cytochrome c] + 2 H2O + 4 H(+)(out). Component of the cytochrome c oxidase, the last enzyme in the mitochondrial electron transport chain which drives oxidative phosphorylation. The respiratory chain contains 3 multisubunit complexes succinate dehydrogenase (complex II, CII), ubiquinol-cytochrome c oxidoreductase (cytochrome b-c1 complex, complex III, CIII) and cytochrome c oxidase (complex IV, CIV), that cooperate to transfer electrons derived from NADH and succinate to molecular oxygen, creating an electrochemical gradient over the inner membrane that drives transmembrane transport and the ATP synthase. Cytochrome c oxidase is the component of the respiratory chain that catalyzes the reduction of oxygen to water. Electrons originating from reduced cytochrome c in the intermembrane space (IMS) are transferred via the dinuclear copper A center (CU(A)) of subunit 2 and heme A of subunit 1 to the active site in subunit 1, a binuclear center (BNC) formed by heme A3 and copper B (CU(B)). The BNC reduces molecular oxygen to 2 water molecules using 4 electrons from cytochrome c in the IMS and 4 protons from the mitochondrial matrix. In Cairina moschata (Muscovy duck), this protein is Cytochrome c oxidase subunit 2 (MT-CO2).